The following is a 906-amino-acid chain: Protein translocase subunit SecA (906 aa).

Residues Gln-86, 104-108, and Asp-511 contribute to the ATP site; that span reads GEGKT. Composition is skewed to basic and acidic residues over residues 853-865 and 877-888; these read HESVIDNNQRHDE and VRREGPKVKRND. The disordered stretch occupies residues 853–906; that stretch reads HESVIDNNQRHDEDEQEEAPKVQQVRREGPKVKRNDPCPCGSGKKYKQCHSKVE. The Zn(2+) site is built by Cys-890, Cys-892, Cys-901, and His-902. A compositionally biased stretch (basic residues) spans 896–906; that stretch reads KKYKQCHSKVE.

Belongs to the SecA family. As to quaternary structure, monomer and homodimer. Part of the essential Sec protein translocation apparatus which comprises SecA, SecYEG and auxiliary proteins SecDF-YajC and YidC. Zn(2+) is required as a cofactor.

Its subcellular location is the cell inner membrane. The protein resides in the cytoplasm. The enzyme catalyses ATP + H2O + cellular proteinSide 1 = ADP + phosphate + cellular proteinSide 2.. Functionally, part of the Sec protein translocase complex. Interacts with the SecYEG preprotein conducting channel. Has a central role in coupling the hydrolysis of ATP to the transfer of proteins into and across the cell membrane, serving both as a receptor for the preprotein-SecB complex and as an ATP-driven molecular motor driving the stepwise translocation of polypeptide chains across the membrane. This chain is Protein translocase subunit SecA, found in Francisella tularensis subsp. mediasiatica (strain FSC147).